A 200-amino-acid polypeptide reads, in one-letter code: Pyridoxal 5'-phosphate synthase subunit PdxT (200 aa).

52-54 provides a ligand contact to L-glutamine; the sequence is GES. C84 serves as the catalytic Nucleophile. L-glutamine is bound by residues R116 and 145-146; that span reads IR. Catalysis depends on charge relay system residues H181 and E183.

Belongs to the glutaminase PdxT/SNO family. In the presence of PdxS, forms a dodecamer of heterodimers. Only shows activity in the heterodimer.

It carries out the reaction aldehydo-D-ribose 5-phosphate + D-glyceraldehyde 3-phosphate + L-glutamine = pyridoxal 5'-phosphate + L-glutamate + phosphate + 3 H2O + H(+). It catalyses the reaction L-glutamine + H2O = L-glutamate + NH4(+). It participates in cofactor biosynthesis; pyridoxal 5'-phosphate biosynthesis. In terms of biological role, catalyzes the hydrolysis of glutamine to glutamate and ammonia as part of the biosynthesis of pyridoxal 5'-phosphate. The resulting ammonia molecule is channeled to the active site of PdxS. The chain is Pyridoxal 5'-phosphate synthase subunit PdxT from Saccharolobus islandicus (strain Y.G.57.14 / Yellowstone #1) (Sulfolobus islandicus).